A 490-amino-acid polypeptide reads, in one-letter code: ATP synthase subunit beta, chloroplastic (490 aa).

170-177 (GGAGVGKT) is a binding site for ATP.

This sequence belongs to the ATPase alpha/beta chains family. In terms of assembly, F-type ATPases have 2 components, CF(1) - the catalytic core - and CF(0) - the membrane proton channel. CF(1) has five subunits: alpha(3), beta(3), gamma(1), delta(1), epsilon(1). CF(0) has four main subunits: a(1), b(1), b'(1) and c(9-12).

The protein localises to the plastid. It is found in the chloroplast thylakoid membrane. It carries out the reaction ATP + H2O + 4 H(+)(in) = ADP + phosphate + 5 H(+)(out). Its function is as follows. Produces ATP from ADP in the presence of a proton gradient across the membrane. The catalytic sites are hosted primarily by the beta subunits. The sequence is that of ATP synthase subunit beta, chloroplastic from Ipomoea quamoclit (Cypress vine).